The following is a 130-amino-acid chain: MAENQYYGTGRRKSSAARVFIKPGTGNIVINKRSLEVYFGRPTARMVVNQPLELVEMTDKLDLYITVSGGGISGQAGAIRHGITRALMQYDESLRPALRAAGYVTRDARCVERKKVGLRKARRKPQFSKR.

Belongs to the universal ribosomal protein uS9 family.

In Aliivibrio fischeri (strain MJ11) (Vibrio fischeri), this protein is Small ribosomal subunit protein uS9.